Consider the following 267-residue polypeptide: MKYKFSHNFISYNLFLFVFMSLILLPYSHASSMGFNTSQHKFSVRTGETRIIYPLSSVKGVSLSVTNPQDYPILVQTQVKGEDKHSPAPFMATPPLFRLDAGMRGRVRVTRTGGNFPEDRESLQWLCITGVPPKEGDVWDNSQHDKKNNMQDVNLNILLSVGTCMKLLVRPDQLRQKPEEMAGKLIWHRNGQQLQVNNPTPFYMNFKSVSLGNKNIKLSSAGNENYVAPFAERSFSLPVDMAERPAEINWQIINDLGSESQVFKANI.

Positions 1-34 are cleaved as a signal peptide; the sequence is MKYKFSHNFISYNLFLFVFMSLILLPYSHASSMG. Cysteines 127 and 164 form a disulfide.

The protein belongs to the periplasmic pilus chaperone family.

The protein resides in the periplasm. Its function is as follows. Required for the biogenesis of the MyfA fimbria. This chain is Chaperone protein MyfB (myfB), found in Yersinia enterocolitica.